Reading from the N-terminus, the 91-residue chain is Small membrane A-kinase anchor protein (91 aa).

Gly2 is lipidated: N-myristoyl glycine.

The protein belongs to the small membrane AKAP family. Post-translationally, may be palmitoylated at Cys-3.

It localises to the cell membrane. In terms of biological role, binds to type I regulatory subunits of protein kinase A and may anchor/target them to the plasma membrane. In Xenopus laevis (African clawed frog), this protein is Small membrane A-kinase anchor protein.